The following is a 143-amino-acid chain: Nucleoside diphosphate kinase (143 aa).

ATP-binding residues include Lys11, Phe59, Arg87, Thr93, Arg104, and Asn114. Catalysis depends on His117, which acts as the Pros-phosphohistidine intermediate.

Belongs to the NDK family. As to quaternary structure, homotetramer. The cofactor is Mg(2+).

Its subcellular location is the cytoplasm. It carries out the reaction dZDP + ATP = dZTP + ADP. It catalyses the reaction a 2'-deoxyribonucleoside 5'-diphosphate + ATP = a 2'-deoxyribonucleoside 5'-triphosphate + ADP. The catalysed reaction is a ribonucleoside 5'-diphosphate + ATP = a ribonucleoside 5'-triphosphate + ADP. It functions in the pathway purine metabolism. Major role in the synthesis of nucleoside triphosphates other than ATP. The ATP gamma phosphate is transferred to the NDP beta phosphate via a ping-pong mechanism, using a phosphorylated active-site intermediate. Functionally, (Microbial infection) Catalyzes the phosphorylation of dZDP to dZTP, when the bacterium is infected by a phage that produces the substrate for the synthesis of dZTP (2- amino-2'-deoxyadenosine 5'-triphosphate), which is then used by the phage as a DNA polymerase substrate. The protein is Nucleoside diphosphate kinase of Salmonella paratyphi C (strain RKS4594).